We begin with the raw amino-acid sequence, 347 residues long: sn-glycerol-3-phosphate import ATP-binding protein UgpC 1 (347 aa).

One can recognise an ABC transporter domain in the interval Ile-4–Ile-234. Gly-36–Ser-43 contacts ATP.

The protein belongs to the ABC transporter superfamily. sn-glycerol-3-phosphate importer (TC 3.A.1.1.3) family. As to quaternary structure, the complex is composed of two ATP-binding proteins (UgpC), two transmembrane proteins (UgpA and UgpE) and a solute-binding protein (UgpB).

The protein localises to the cell inner membrane. The catalysed reaction is sn-glycerol 3-phosphate(out) + ATP + H2O = sn-glycerol 3-phosphate(in) + ADP + phosphate + H(+). Its function is as follows. Part of the ABC transporter complex UgpBAEC involved in sn-glycerol-3-phosphate (G3P) import. Responsible for energy coupling to the transport system. This chain is sn-glycerol-3-phosphate import ATP-binding protein UgpC 1, found in Rhizobium etli (strain ATCC 51251 / DSM 11541 / JCM 21823 / NBRC 15573 / CFN 42).